The sequence spans 798 residues: Nucleolin homolog 1 (798 aa).

The interval 1 to 548 is disordered; sequence MGFDSPRGRG…IISEEERRRQ (548 aa). Positions 8 to 34 are enriched in gly residues; sequence GRGGGGFRGGRGGGSGFTPRGGGGGFR. 3 stretches are compositionally biased toward basic and acidic residues: residues 59–75, 88–98, and 106–116; these read GGDRGRSPGGFRGDREG, GGDRGGFRGGD, and GGDRGNFRGGD. Gly residues-rich tracts occupy residues 150-164 and 171-184; these read RGGGRGGFTPRGRGG and GGRGNFQSRGGGSR. Composition is skewed to acidic residues over residues 196–205, 226–242, 258–278, and 287–317; these read SDGDDDEEEE, DDSGEDEEDEEESDEEP, EDSDDDEEDDDEEEEESDDDA, and VEEDEEDEEDEEEIEMDEEDEEEEEDEEETE. Over residues 328–350 the composition is skewed to polar residues; sequence SLKSVDSTKGKQVNLSKVATPTT. 2 stretches are compositionally biased toward acidic residues: residues 378–404 and 424–450; these read DDDSDEEDEEDEEVEEEDEEEEEEEED and IEEDSDDEDEDEEEEEDEEDEEEEEDT. Residues 467 to 476 show a composition bias toward low complexity; that stretch reads AANRAAASAA. Over residues 478 to 504 the composition is skewed to acidic residues; that stretch reads DSDEDEDEEDEEDVEEEDEEEEEEEDI. Residues 532–548 are compositionally biased toward basic and acidic residues; sequence VKSDGKSIISEEERRRQ. The RRM domain occupies 638–713; that stretch reads LQLFINALPG…HLVDVFYARH (76 aa). The disordered stretch occupies residues 736–798; it reads PKVAADSSGD…FKKTGFKGKK (63 aa). Acidic residues predominate over residues 743–762; the sequence is SGDDSEEVASSDEGIQEVEE. Residues 783–798 are compositionally biased toward basic residues; sequence QQKKPQFKKTGFKGKK.

As to quaternary structure, identified in an mRNP granule complex containing untranslated mRNAs.

The protein resides in the nucleus. The protein localises to the nucleolus. Functionally, nucleolin is the major nucleolar protein of growing eukaryotic cells. It is found associated with intranucleolar chromatin and pre-ribosomal particles. It induces chromatin decondensation by binding to histone H1. It is thought to play a role in pre-rRNA transcription and ribosome assembly. May play a role in the process of transcriptional elongation. Involved in phase separation into sub-nucleolar condensates. The protein is Nucleolin homolog 1 of Caenorhabditis elegans.